The chain runs to 306 residues: Aspartate carbamoyltransferase catalytic subunit (306 aa).

Carbamoyl phosphate-binding residues include Arg55 and Thr56. Residue Lys85 participates in L-aspartate binding. The carbamoyl phosphate site is built by Arg106, His133, and Gln136. Arg166 and Arg228 together coordinate L-aspartate. Residues Leu264 and Pro265 each contribute to the carbamoyl phosphate site.

It belongs to the aspartate/ornithine carbamoyltransferase superfamily. ATCase family. Heterododecamer (2C3:3R2) of six catalytic PyrB chains organized as two trimers (C3), and six regulatory PyrI chains organized as three dimers (R2).

The enzyme catalyses carbamoyl phosphate + L-aspartate = N-carbamoyl-L-aspartate + phosphate + H(+). The protein operates within pyrimidine metabolism; UMP biosynthesis via de novo pathway; (S)-dihydroorotate from bicarbonate: step 2/3. Catalyzes the condensation of carbamoyl phosphate and aspartate to form carbamoyl aspartate and inorganic phosphate, the committed step in the de novo pyrimidine nucleotide biosynthesis pathway. This chain is Aspartate carbamoyltransferase catalytic subunit, found in Serratia marcescens.